We begin with the raw amino-acid sequence, 206 residues long: MDEDVLTTLKILIIGESGVGKSSLLLRFTDDTFDPELAATIGVDFKVKTISVDGNKAKLAIWDTAGQERFRTLTPSYYRGAQGVILVYDVTRRDTFVKLDNWLNELETYCTRNDIVKMLVGNKIDKENREVDRNEGLKFARKHSMLFIEASAKTCDGVQCAFEELVEKIIQTPGLWESESQNKGVKLSNKEEGHGGGACGGYCSML.

12 residues coordinate GTP: Ser-17, Gly-20, Lys-21, Ser-22, Ser-23, Asp-34, Pro-35, Thr-40, Gly-66, Lys-123, Asp-125, and Ala-152. Ser-22 contributes to the Mg(2+) binding site. 2 consecutive short sequence motifs (switch) follow at residues 31–45 (DTFDPELAATIGVDF) and 63–80 (DTAGQERFRTLTPSYYRG). Thr-40 is a binding site for Mg(2+). Residue Cys-199 is the site of S-palmitoyl cysteine attachment. Cysteine methyl ester is present on Cys-203. Cys-203 carries the S-geranylgeranyl cysteine lipid modification. A propeptide spans 204-206 (SML) (removed in mature form).

This sequence belongs to the small GTPase superfamily. Rab family. Requires Mg(2+) as cofactor.

It localises to the endoplasmic reticulum membrane. It is found in the golgi apparatus. The protein localises to the cis-Golgi network membrane. Its subcellular location is the lipid droplet. The protein resides in the apical cell membrane. The enzyme catalyses GTP + H2O = GDP + phosphate + H(+). Its activity is regulated as follows. Regulated by guanine nucleotide exchange factors (GEFs) which promote the exchange of bound GDP for free GTP. Regulated by GTPase activating proteins (GAPs) which increase the GTP hydrolysis activity at the ER membrane. Inhibited by GDP dissociation inhibitors (GDIs) which prevent Rab-GDP dissociation. The small GTPases Rab are key regulators of intracellular membrane trafficking, from the formation of transport vesicles to their fusion with membranes. Rabs cycle between an inactive GDP-bound form and an active GTP-bound form that is able to recruit to membranes different sets of downstream effectors directly responsible for vesicle formation, movement, tethering and fusion. RAB18 is required for the localization of ZFYVE1 to lipid droplets and for its function in mediating the formation of endoplasmic reticulum-lipid droplets (ER-LD) contacts. Also required for maintaining endoplasmic reticulum structure. Plays a role in apical endocytosis/recycling. Plays a key role in eye and brain development and neurodegeneration. The sequence is that of Ras-related protein Rab-18 (RAB18) from Gallus gallus (Chicken).